We begin with the raw amino-acid sequence, 574 residues long: Thiol:disulfide interchange protein DsbD (574 aa).

The signal sequence occupies residues 1-19 (MAHRILTLILLFCSAHASA). A disulfide bond links cysteine 122 and cysteine 128. The interval 147–169 (VKANAATPSAATGEQTRVNSDSP) is disordered. The span at 152–169 (ATPSAATGEQTRVNSDSP) shows a compositional bias: polar residues. 7 consecutive transmembrane segments (helical) span residues 173–193 (LPFS…TPCV), 218–238 (LLAF…GLVV), 253–273 (WVLV…FGLF), 306–326 (IAGL…LLYI), 333–353 (WLGG…LILV), 367–387 (WMEQ…VFLL), and 399–419 (LWSV…LNAT). A disulfide bridge links cysteine 192 with cysteine 314. The region spanning 430-574 (LLGAAMICAR…FATHLHNRLR (145 aa)) is the Thioredoxin domain. The cysteines at positions 489 and 492 are disulfide-linked.

The protein belongs to the thioredoxin family. DsbD subfamily.

The protein localises to the cell inner membrane. The catalysed reaction is [protein]-dithiol + NAD(+) = [protein]-disulfide + NADH + H(+). It catalyses the reaction [protein]-dithiol + NADP(+) = [protein]-disulfide + NADPH + H(+). Its function is as follows. Required to facilitate the formation of correct disulfide bonds in some periplasmic proteins and for the assembly of the periplasmic c-type cytochromes. Acts by transferring electrons from cytoplasmic thioredoxin to the periplasm. This transfer involves a cascade of disulfide bond formation and reduction steps. The protein is Thiol:disulfide interchange protein DsbD of Cronobacter sakazakii (strain ATCC BAA-894) (Enterobacter sakazakii).